A 402-amino-acid chain; its full sequence is Leucine aminopeptidase 1 (402 aa).

The N-terminal stretch at M1–A18 is a signal peptide. The propeptide occupies R19 to K92. Residues N111 and N184 are each glycosylated (N-linked (GlcNAc...) asparagine). Residues H192, D211, E250, and D277 each coordinate Zn(2+). N-linked (GlcNAc...) asparagine glycosylation occurs at N304. A disulfide bond links C326 and C330. H359 is a binding site for Zn(2+).

Belongs to the peptidase M28 family. M28E subfamily. In terms of assembly, monomer. Zn(2+) is required as a cofactor.

The protein resides in the secreted. Its function is as follows. Extracellular aminopeptidase that allows assimilation of proteinaceous substrates. The polypeptide is Leucine aminopeptidase 1 (lap1) (Neurospora crassa (strain ATCC 24698 / 74-OR23-1A / CBS 708.71 / DSM 1257 / FGSC 987)).